Consider the following 286-residue polypeptide: AB hydrolase superfamily protein YfhM (286 aa).

One can recognise an AB hydrolase-1 domain in the interval 27-272; sequence PLIVLLHGFP…ASHWINHEKP (246 aa). Aspartate 103 acts as the Nucleophile in catalysis. Tyrosine 210 functions as the Proton donor in the catalytic mechanism. Residue histidine 265 is the Proton acceptor of the active site.

Belongs to the AB hydrolase superfamily. Epoxide hydrolase family.

This chain is AB hydrolase superfamily protein YfhM (yfhM), found in Bacillus subtilis (strain 168).